The primary structure comprises 558 residues: MAKSRRDRNSWGGFSEKSSDWSSEEEEPVRKAGPVQVLIVKDDHSFELDEAALNRILLSQAVRDKEVVAVSVAGAFRKGKSFLMDFMLRYMYNQESVDWVGDYNEPLTGFSWRGGSERETTGIQIWSEVFLINKLDGKKVAVLLMDTQGTFDSQSTLRDSATVFALSTMISSIQVYNLSQNVQEDDLQHLQLFTEYGRLAMEETFLKPFQSLIFLVRDWSFPYEFSYGADGGAKFLEKRLKVSGNQHEELQNVRKHIHSCFTNISCFLLPHPGLKVATNPNFDGKLKEIDDEFIKNLKILIPWLLSPERLDIKEINGNKITCRGLLEYFKAYIKIYQGEELPHPKSMLQATAEANNLAAVATAKDTYNKKMEEVCGGDKPFLAPNDLQSKHLQLKEESVKLFRGVKKMGGEEFSRRYLQQLESEIDELYIQYIKHNDSKNIFHAARTPATLFVVIFITYVIAGVTGFIGLDIIASLCNMIMGLTLITLCTWAYIRYSGEYRELGAVIDQVAAALWDQGSTNEALYKLYSAAATHRHLCHQAFPAPKSEPTQQPEKKKI.

The interval 1 to 28 (MAKSRRDRNSWGGFSEKSSDWSSEEEEP) is disordered. Residues 1–34 (MAKSRRDRNSWGGFSEKSSDWSSEEEEPVRKAGP) are N-terminal hypervariable region (HVR). At 1-449 (MAKSRRDRNS…NIFHAARTPA (449 aa)) the chain is on the cytoplasmic side. 3 positions are modified to phosphoserine: Ser10, Ser22, and Ser23. In terms of domain architecture, GB1/RHD3-type G spans 64 to 309 (DKEVVAVSVA…LIPWLLSPER (246 aa)). Residues Arg77, Lys78, Gly79, Lys80, Ser81, Phe82, Gln148, Arg217, Asp218, Val276, and Asn279 each contribute to the GDP site. GTP is bound by residues Arg77, Lys78, Gly79, Lys80, Ser81, and Phe82. Ser81 is a binding site for Mg(2+). GTP-binding residues include Arg217, Asp218, and Val276. Residues 347-438 (MLQATAEANN…YIQYIKHNDS (92 aa)) form a 3HB (three-helix bundle) domain region. Lys395 bears the N6-acetyllysine mark. Positions 412–439 (EFSRRYLQQLESEIDELYIQYIKHNDSK) form a coiled coil. Residues 439 to 447 (KNIFHAART) form a linker region. Residues 450 to 470 (TLFVVIFITYVIAGVTGFIGL) traverse the membrane as a helical segment. Residue Asp471 is a topological domain, lumenal. The chain crosses the membrane as a helical span at residues 472–492 (IIASLCNMIMGLTLITLCTWA). The Cytoplasmic segment spans residues 493-558 (YIRYSGEYRE…PTQQPEKKKI (66 aa)). The autoinhibitory domain stretch occupies residues 521–558 (NEALYKLYSAAATHRHLCHQAFPAPKSEPTQQPEKKKI).

This sequence belongs to the TRAFAC class dynamin-like GTPase superfamily. GB1/RHD3 GTPase family. GB1 subfamily. In terms of assembly, monomeric and homodimeric. The homodimer, transiently formed by two molecules on opposing membranes, is the active form mediating ER membrane fusion. Interacts with REEP1, REEP5, RTN3 and RTN4 (via the transmembrane region); these proteins are involved in endoplasmic reticulum tubular network organization. Interacts with ZFYVE27; both proteins are involved in endoplasmic reticulum tubular network organization. Interacts with ARL6IP1; both proteins are involved in endoplasmic reticulum tubular network organization. Interacts with SPAST; the interaction is direct, could recruit SPAST to Golgi membranes. Interacts (via N-terminal region) with MAP4K4 (via CNH regulatory domain). May interact with TMED2. Interacts with CPT1C. Phosphorylated. Phosphorylation, by different kinases, of the N-terminal hypervariable region (HVR) regulates the ATL1-mediated membrane tethering step.

Its subcellular location is the endoplasmic reticulum membrane. The protein localises to the golgi apparatus membrane. It localises to the cell projection. It is found in the axon. It catalyses the reaction GTP + H2O = GDP + phosphate + H(+). Its function is as follows. Atlastin-1 (ATL1) is a membrane-anchored GTPase that mediates the GTP-dependent fusion of endoplasmic reticulum (ER) membranes, maintaining the continuous ER network. It facilitates the formation of three-way junctions where ER tubules intersect. Two atlastin-1 on neighboring ER tubules bind GTP and form loose homodimers through the GB1/RHD3-type G domains and 3HB regions. Upon GTP hydrolysis, the 3HB regions tighten, pulling the membranes together to drive their fusion. After fusion, the homodimer disassembles upon release of inorganic phosphate (Pi). Subsequently, GDP dissociates, resetting the monomers to a conformation ready for a new fusion cycle. May also regulate more or less directly Golgi biogenesis. Indirectly regulates axonal development. In Mus musculus (Mouse), this protein is Atlastin-1.